A 291-amino-acid chain; its full sequence is Transmembrane O-methyltransferase (291 aa).

The chain crosses the membrane as a helical span at residues V31–V51. S-adenosyl-L-methionine is bound by residues E137, G139–T140, S145, E163, and S193.

Belongs to the class I-like SAM-binding methyltransferase superfamily. Cation-dependent O-methyltransferase family. As to quaternary structure, interacts with LHFPL5, PCDH15, TMC1, TMC2 and TMIE. Interacts directly with TMC1. The interaction of TOMT with TMC1 and TMC2 is required for the transportation of TMC1/2 into the stereocilia of hair cells.

Its subcellular location is the membrane. It is found in the cytoplasm. The protein resides in the endoplasmic reticulum. It catalyses the reaction a catechol + S-adenosyl-L-methionine = a guaiacol + S-adenosyl-L-homocysteine + H(+). In terms of biological role, catalyzes the O-methylation, and thereby the inactivation, of catecholamine neurotransmitters and catechol hormones. Required for auditory function. Component of the cochlear hair cell's mechanotransduction (MET) machinery. Involved in the assembly of the asymmetric tip-link MET complex. Required for transportation of TMC1 and TMC2 proteins into the mechanically sensitive stereocilia of the hair cells. The function in MET is independent of the enzymatic activity. This is Transmembrane O-methyltransferase from Homo sapiens (Human).